Reading from the N-terminus, the 461-residue chain is Pyruvate kinase (461 aa).

Arginine 46 contacts substrate. The K(+) site is built by asparagine 48 and aspartate 80. Residue asparagine 48–histidine 51 coordinates ATP. Residues arginine 87 and lysine 165 each coordinate ATP. Glutamate 232 serves as a coordination point for Mg(2+). 3 residues coordinate substrate: glycine 255, aspartate 256, and threonine 288. Position 256 (aspartate 256) interacts with Mg(2+).

Belongs to the pyruvate kinase family. Homotetramer. A divalent metal cation serves as cofactor.

The catalysed reaction is pyruvate + ATP = phosphoenolpyruvate + ADP + H(+). It participates in carbohydrate degradation; glycolysis; pyruvate from D-glyceraldehyde 3-phosphate: step 5/5. Its activity is regulated as follows. Not activated by classical allosteric effectors. The sequence is that of Pyruvate kinase (pyk) from Pyrobaculum aerophilum (strain ATCC 51768 / DSM 7523 / JCM 9630 / CIP 104966 / NBRC 100827 / IM2).